Reading from the N-terminus, the 413-residue chain is ATP-dependent (S)-NAD(P)H-hydrate dehydratase (413 aa).

One can recognise a YjeF C-terminal domain in the interval 98–402 (NLNHFLSYVP…KSVPNALVWG (305 aa)). Residues Gly199 and 252 to 258 (NFVEYRA) contribute to the (6S)-NADPHX site. Residues 292 to 296 (KGQED) and 311 to 320 (GMPRRCGGQG) contribute to the ATP site. Asp321 contacts (6S)-NADPHX.

Belongs to the NnrD/CARKD family. Requires Mg(2+) as cofactor.

The enzyme catalyses (6S)-NADHX + ATP = ADP + phosphate + NADH + H(+). It carries out the reaction (6S)-NADPHX + ATP = ADP + phosphate + NADPH + H(+). Its function is as follows. Catalyzes the dehydration of the S-form of NAD(P)HX at the expense of ATP, which is converted to ADP. Together with NAD(P)HX epimerase, which catalyzes the epimerization of the S- and R-forms, the enzyme allows the repair of both epimers of NAD(P)HX, a damaged form of NAD(P)H that is a result of enzymatic or heat-dependent hydration. This chain is ATP-dependent (S)-NAD(P)H-hydrate dehydratase, found in Heterostelium pallidum (strain ATCC 26659 / Pp 5 / PN500) (Cellular slime mold).